Here is a 289-residue protein sequence, read N- to C-terminus: 4-diphosphocytidyl-2-C-methyl-D-erythritol kinase (289 aa).

The active site involves lysine 10. Residue 94-104 coordinates ATP; sequence PVAAGLAGGSS. Aspartate 136 is an active-site residue.

It belongs to the GHMP kinase family. IspE subfamily.

It carries out the reaction 4-CDP-2-C-methyl-D-erythritol + ATP = 4-CDP-2-C-methyl-D-erythritol 2-phosphate + ADP + H(+). Its pathway is isoprenoid biosynthesis; isopentenyl diphosphate biosynthesis via DXP pathway; isopentenyl diphosphate from 1-deoxy-D-xylulose 5-phosphate: step 3/6. Catalyzes the phosphorylation of the position 2 hydroxy group of 4-diphosphocytidyl-2C-methyl-D-erythritol. This Bacillus mycoides (strain KBAB4) (Bacillus weihenstephanensis) protein is 4-diphosphocytidyl-2-C-methyl-D-erythritol kinase.